A 212-amino-acid polypeptide reads, in one-letter code: Glycerol-3-phosphate acyltransferase (212 aa).

A run of 5 helical transmembrane segments spans residues 5-25 (ALGM…ILVC), 53-73 (VAAA…VWLA), 80-100 (PLYL…PVFF), 112-132 (FGAI…TWLL), and 138-158 (GYSS…VWWF).

This sequence belongs to the PlsY family. In terms of assembly, probably interacts with PlsX.

Its subcellular location is the cell inner membrane. The enzyme catalyses an acyl phosphate + sn-glycerol 3-phosphate = a 1-acyl-sn-glycero-3-phosphate + phosphate. The protein operates within lipid metabolism; phospholipid metabolism. Its function is as follows. Catalyzes the transfer of an acyl group from acyl-phosphate (acyl-PO(4)) to glycerol-3-phosphate (G3P) to form lysophosphatidic acid (LPA). This enzyme utilizes acyl-phosphate as fatty acyl donor, but not acyl-CoA or acyl-ACP. This Serratia proteamaculans (strain 568) protein is Glycerol-3-phosphate acyltransferase.